Reading from the N-terminus, the 611-residue chain is Pescadillo homolog (611 aa).

Positions 310-335 (VQMGDPDEASPGEEEQFVAHASKSAP) are disordered. Residues 314 to 325 (DPDEASPGEEEQ) are compositionally biased toward acidic residues. In terms of domain architecture, BRCT spans 354–455 (PSSRLFAPYT…KILLEDTYAQ (102 aa)). 2 disordered regions span residues 469 to 506 (YEGAYDPTAATNDADMDVETDGEEGEADASGDEKESNT) and 545 to 611 (VKKA…AGGK). The segment covering 482 to 498 (ADMDVETDGEEGEADAS) has biased composition (acidic residues). Composition is skewed to basic and acidic residues over residues 552–569 (KKPDTASKATEEAEKDMN) and 579–602 (KLYEKMKYSQQKKAAEKEKLEQRK). A coiled-coil region spans residues 580–609 (LYEKMKYSQQKKAAEKEKLEQRKKQLQKAG).

The protein belongs to the pescadillo family. Component of the NOP7 complex, composed of ERB1, NOP7 and YTM1. The complex is held together by ERB1, which interacts with NOP7 via its N-terminal domain and with YTM1 via a high-affinity interaction between the seven-bladed beta-propeller domains of the 2 proteins. The NOP7 complex associates with the 66S pre-ribosome.

The protein resides in the nucleus. The protein localises to the nucleolus. It is found in the nucleoplasm. In terms of biological role, component of the NOP7 complex, which is required for maturation of the 25S and 5.8S ribosomal RNAs and formation of the 60S ribosome. This chain is Pescadillo homolog, found in Coprinopsis cinerea (strain Okayama-7 / 130 / ATCC MYA-4618 / FGSC 9003) (Inky cap fungus).